The sequence spans 167 residues: Crossover junction endodeoxyribonuclease RuvC (167 aa).

Active-site residues include aspartate 11, glutamate 71, and aspartate 143. Residues aspartate 11, glutamate 71, and aspartate 143 each coordinate Mg(2+).

The protein belongs to the RuvC family. Homodimer which binds Holliday junction (HJ) DNA. The HJ becomes 2-fold symmetrical on binding to RuvC with unstacked arms; it has a different conformation from HJ DNA in complex with RuvA. In the full resolvosome a probable DNA-RuvA(4)-RuvB(12)-RuvC(2) complex forms which resolves the HJ. Requires Mg(2+) as cofactor.

It localises to the cytoplasm. The catalysed reaction is Endonucleolytic cleavage at a junction such as a reciprocal single-stranded crossover between two homologous DNA duplexes (Holliday junction).. Functionally, the RuvA-RuvB-RuvC complex processes Holliday junction (HJ) DNA during genetic recombination and DNA repair. Endonuclease that resolves HJ intermediates. Cleaves cruciform DNA by making single-stranded nicks across the HJ at symmetrical positions within the homologous arms, yielding a 5'-phosphate and a 3'-hydroxyl group; requires a central core of homology in the junction. The consensus cleavage sequence is 5'-(A/T)TT(C/G)-3'. Cleavage occurs on the 3'-side of the TT dinucleotide at the point of strand exchange. HJ branch migration catalyzed by RuvA-RuvB allows RuvC to scan DNA until it finds its consensus sequence, where it cleaves and resolves the cruciform DNA. This Bartonella bacilliformis (strain ATCC 35685 / KC583 / Herrer 020/F12,63) protein is Crossover junction endodeoxyribonuclease RuvC.